A 379-amino-acid chain; its full sequence is Multicilin (379 aa).

Disordered stretches follow at residues S26–S46 and L87–L106. Positions E175 to L223 form a coiled coil. Residues L289–S309 show a composition bias toward basic and acidic residues. The tract at residues L289 to R311 is disordered.

This sequence belongs to the geminin family. As to quaternary structure, heterodimer (via coiled-coil domain) with GMNN (via coiled-coil domain); targets GMNN to the nucleus. Can form homodimers (in vitro, via coiled-coil domain), but these are much less stable than the heterodimer formed with GMNN.

It localises to the nucleus. Transcription regulator specifically required for multiciliate cell differentiation. Acts in a multiprotein complex containing E2F4 and E2F5 that binds and activates genes required for centriole biogenesis. Required for the deuterosome-mediated acentriolar pathway. Plays a role in mitotic cell cycle progression by promoting cell cycle exit. Modulates GMNN activity by reducing its affinity for CDT1. In Rattus norvegicus (Rat), this protein is Multicilin (Mcidas).